Reading from the N-terminus, the 222-residue chain is Probable transaldolase (222 aa).

Lys-91 (schiff-base intermediate with substrate) is an active-site residue.

The protein belongs to the transaldolase family. Type 3B subfamily.

Its subcellular location is the cytoplasm. It carries out the reaction D-sedoheptulose 7-phosphate + D-glyceraldehyde 3-phosphate = D-erythrose 4-phosphate + beta-D-fructose 6-phosphate. It functions in the pathway carbohydrate degradation; pentose phosphate pathway; D-glyceraldehyde 3-phosphate and beta-D-fructose 6-phosphate from D-ribose 5-phosphate and D-xylulose 5-phosphate (non-oxidative stage): step 2/3. Its function is as follows. Transaldolase is important for the balance of metabolites in the pentose-phosphate pathway. The polypeptide is Probable transaldolase (Chlorobium phaeovibrioides (strain DSM 265 / 1930) (Prosthecochloris vibrioformis (strain DSM 265))).